The primary structure comprises 329 residues: Probable allantoicase (329 aa).

This sequence belongs to the allantoicase family.

The catalysed reaction is allantoate + H2O = (S)-ureidoglycolate + urea. It participates in nitrogen metabolism; (S)-allantoin degradation; (S)-ureidoglycolate from allantoate (aminidohydrolase route): step 1/1. The protein is Probable allantoicase of Nocardia farcinica (strain IFM 10152).